Here is a 95-residue protein sequence, read N- to C-terminus: Co-chaperonin GroES (95 aa).

Belongs to the GroES chaperonin family. As to quaternary structure, heptamer of 7 subunits arranged in a ring. Interacts with the chaperonin GroEL.

The protein localises to the cytoplasm. In terms of biological role, together with the chaperonin GroEL, plays an essential role in assisting protein folding. The GroEL-GroES system forms a nano-cage that allows encapsulation of the non-native substrate proteins and provides a physical environment optimized to promote and accelerate protein folding. GroES binds to the apical surface of the GroEL ring, thereby capping the opening of the GroEL channel. The sequence is that of Co-chaperonin GroES from Pseudoalteromonas translucida (strain TAC 125).